Consider the following 699-residue polypeptide: Elongation factor G (699 aa).

The tr-type G domain maps to 8-283 (EHIRNIGICA…AVVDFLPSPI (276 aa)). Residues 17-24 (AHIDAGKT), 81-85 (DTPGH), and 135-138 (NKMD) each bind GTP.

This sequence belongs to the TRAFAC class translation factor GTPase superfamily. Classic translation factor GTPase family. EF-G/EF-2 subfamily.

The protein resides in the cytoplasm. In terms of biological role, catalyzes the GTP-dependent ribosomal translocation step during translation elongation. During this step, the ribosome changes from the pre-translocational (PRE) to the post-translocational (POST) state as the newly formed A-site-bound peptidyl-tRNA and P-site-bound deacylated tRNA move to the P and E sites, respectively. Catalyzes the coordinated movement of the two tRNA molecules, the mRNA and conformational changes in the ribosome. The sequence is that of Elongation factor G from Rickettsia sibirica (strain ATCC VR-151 / 246).